The chain runs to 315 residues: Ribosomal RNA small subunit methyltransferase H (315 aa).

S-adenosyl-L-methionine-binding positions include 37-39 (GGH), D57, F83, D105, and Q112.

This sequence belongs to the methyltransferase superfamily. RsmH family.

It is found in the cytoplasm. It carries out the reaction cytidine(1402) in 16S rRNA + S-adenosyl-L-methionine = N(4)-methylcytidine(1402) in 16S rRNA + S-adenosyl-L-homocysteine + H(+). Functionally, specifically methylates the N4 position of cytidine in position 1402 (C1402) of 16S rRNA. The sequence is that of Ribosomal RNA small subunit methyltransferase H from Pseudomonas putida (strain W619).